A 1563-amino-acid chain; its full sequence is Ribulose bisphosphate carboxylase (1563 aa).

Residues His-32 and Ser-79 each coordinate substrate. Residues 197 to 217 (LAAAFVGASTTRKASSVARRA) constitute a propeptide, linker. Residue Asn-328 participates in substrate binding. The active-site Proton acceptor is the Lys-383. Lys-385 contributes to the substrate binding site. Mg(2+) contacts are provided by Lys-408, Asp-410, and Glu-411. N6-carboxylysine is present on Lys-408. The active-site Proton acceptor is the His-504. Substrate is bound by residues Arg-505, His-538, and Ser-585. The propeptide at 703–723 (LAAAFVGASTTRKASSVARRA) is linker. Substrate is bound at residue Asn-834. The active-site Proton acceptor is Lys-889. Lys-891 is a substrate binding site. The Mg(2+) site is built by Lys-914, Asp-916, and Glu-917. N6-carboxylysine is present on Lys-914. His-1010 acts as the Proton acceptor in catalysis. The substrate site is built by Arg-1011, His-1044, and Ser-1091. A propeptide spans 1209-1229 (LAAAFVGASTTRKASSVARRA) (linker). Asn-1340 is a substrate binding site. The Proton acceptor role is filled by Lys-1395. Lys-1397 lines the substrate pocket. 3 residues coordinate Mg(2+): Lys-1420, Asp-1422, and Glu-1423. Position 1420 is an N6-carboxylysine (Lys-1420). The active-site Proton acceptor is the His-1516. 2 residues coordinate substrate: Arg-1517 and His-1550.

It belongs to the RuBisCO large chain family. Type II subfamily. Homodimer. The cofactor is Mg(2+). In terms of processing, in Western blots an approximately 220 kDa polyprotein and 2 smaller proteins of about 55 and 52 kDa are detected, suggesting the polyprotein may be cleaved at one end of the linker and then at the other end to give mature RuBisCO.

Its subcellular location is the plastid. The protein resides in the chloroplast. It catalyses the reaction 2 (2R)-3-phosphoglycerate + 2 H(+) = D-ribulose 1,5-bisphosphate + CO2 + H2O. The catalysed reaction is D-ribulose 1,5-bisphosphate + O2 = 2-phosphoglycolate + (2R)-3-phosphoglycerate + 2 H(+). Functionally, ruBisCO catalyzes two reactions: the carboxylation of D-ribulose 1,5-bisphosphate, the primary event in carbon dioxide fixation, as well as the oxidative fragmentation of the pentose substrate. Both reactions occur simultaneously and in competition at the same active site. The chain is Ribulose bisphosphate carboxylase (rbcL) from Prorocentrum minimum (Dinoflagellate).